We begin with the raw amino-acid sequence, 273 residues long: Zinc finger protein 80 (273 aa).

The segment at 49–71 adopts a C2H2-type 1 zinc-finger fold; the sequence is YKCKECGSVFNKNSLLVRHQQIH. The C2H2-type 2; degenerate zinc finger occupies 77–99; the sequence is YEYQECGKAFPEKVDFVRHMRIH. Residues 105 to 127 form a C2H2-type 3; atypical zinc finger; the sequence is CKCVECRKVFNRRSHLLCYRQIH. 4 consecutive C2H2-type zinc fingers follow at residues 133–155, 161–183, 187–211, and 217–239; these read YECS…RVTH, FGCK…MKIH, KPCK…SMTH, and YECK…TRSH.

This sequence belongs to the krueppel C2H2-type zinc-finger protein family.

The protein localises to the nucleus. Functionally, may be involved in transcriptional regulation. This chain is Zinc finger protein 80 (ZNF80), found in Pan troglodytes (Chimpanzee).